We begin with the raw amino-acid sequence, 359 residues long: Ribosomal RNA large subunit methyltransferase M (359 aa).

S-adenosyl-L-methionine is bound by residues Ser-186, 219–222, Asp-238, Asp-258, and Asp-275; that span reads CPGG. Lys-304 functions as the Proton acceptor in the catalytic mechanism.

The protein belongs to the class I-like SAM-binding methyltransferase superfamily. RNA methyltransferase RlmE family. RlmM subfamily. Monomer.

It localises to the cytoplasm. The enzyme catalyses cytidine(2498) in 23S rRNA + S-adenosyl-L-methionine = 2'-O-methylcytidine(2498) in 23S rRNA + S-adenosyl-L-homocysteine + H(+). Functionally, catalyzes the 2'-O-methylation at nucleotide C2498 in 23S rRNA. This is Ribosomal RNA large subunit methyltransferase M from Vibrio vulnificus (strain YJ016).